The primary structure comprises 513 residues: Bifunctional purine biosynthesis protein PurH (513 aa).

Positions M1 to V145 constitute an MGS-like domain.

It belongs to the PurH family.

The catalysed reaction is (6R)-10-formyltetrahydrofolate + 5-amino-1-(5-phospho-beta-D-ribosyl)imidazole-4-carboxamide = 5-formamido-1-(5-phospho-D-ribosyl)imidazole-4-carboxamide + (6S)-5,6,7,8-tetrahydrofolate. The enzyme catalyses IMP + H2O = 5-formamido-1-(5-phospho-D-ribosyl)imidazole-4-carboxamide. Its pathway is purine metabolism; IMP biosynthesis via de novo pathway; 5-formamido-1-(5-phospho-D-ribosyl)imidazole-4-carboxamide from 5-amino-1-(5-phospho-D-ribosyl)imidazole-4-carboxamide (10-formyl THF route): step 1/1. It functions in the pathway purine metabolism; IMP biosynthesis via de novo pathway; IMP from 5-formamido-1-(5-phospho-D-ribosyl)imidazole-4-carboxamide: step 1/1. This Caldicellulosiruptor bescii (strain ATCC BAA-1888 / DSM 6725 / KCTC 15123 / Z-1320) (Anaerocellum thermophilum) protein is Bifunctional purine biosynthesis protein PurH.